Consider the following 480-residue polypeptide: ATP synthase subunit beta (480 aa).

152–159 is a binding site for ATP; sequence GGAGVGKT.

It belongs to the ATPase alpha/beta chains family. F-type ATPases have 2 components, CF(1) - the catalytic core - and CF(0) - the membrane proton channel. CF(1) has five subunits: alpha(3), beta(3), gamma(1), delta(1), epsilon(1). CF(0) has three main subunits: a(1), b(2) and c(9-12). The alpha and beta chains form an alternating ring which encloses part of the gamma chain. CF(1) is attached to CF(0) by a central stalk formed by the gamma and epsilon chains, while a peripheral stalk is formed by the delta and b chains.

The protein localises to the cell membrane. The catalysed reaction is ATP + H2O + 4 H(+)(in) = ADP + phosphate + 5 H(+)(out). In terms of biological role, produces ATP from ADP in the presence of a proton gradient across the membrane. The catalytic sites are hosted primarily by the beta subunits. The sequence is that of ATP synthase subunit beta from Wolbachia sp. subsp. Brugia malayi (strain TRS).